Reading from the N-terminus, the 140-residue chain is Nucleoside diphosphate kinase (140 aa).

6 residues coordinate ATP: K11, F59, R87, T93, R104, and N114. The Pros-phosphohistidine intermediate role is filled by H117.

This sequence belongs to the NDK family. In terms of assembly, homotetramer. Mg(2+) is required as a cofactor.

Its subcellular location is the cytoplasm. It catalyses the reaction a 2'-deoxyribonucleoside 5'-diphosphate + ATP = a 2'-deoxyribonucleoside 5'-triphosphate + ADP. It carries out the reaction a ribonucleoside 5'-diphosphate + ATP = a ribonucleoside 5'-triphosphate + ADP. Major role in the synthesis of nucleoside triphosphates other than ATP. The ATP gamma phosphate is transferred to the NDP beta phosphate via a ping-pong mechanism, using a phosphorylated active-site intermediate. In Rhodopseudomonas palustris (strain BisB5), this protein is Nucleoside diphosphate kinase.